Reading from the N-terminus, the 647-residue chain is Acetyl-coenzyme A synthetase (647 aa).

Residues 190–193 (RGGR) and Thr-310 contribute to the CoA site. Residues 386 to 388 (GEP), 410 to 415 (DTWWQT), Asp-499, and Arg-514 each bind ATP. Ser-522 provides a ligand contact to CoA. Residue Arg-525 coordinates ATP. Mg(2+)-binding residues include Val-536, His-538, and Val-541. Arg-583 serves as a coordination point for CoA. Lys-608 carries the N6-acetyllysine modification.

It belongs to the ATP-dependent AMP-binding enzyme family. Requires Mg(2+) as cofactor. In terms of processing, acetylated. Deacetylation by the SIR2-homolog deacetylase activates the enzyme.

The catalysed reaction is acetate + ATP + CoA = acetyl-CoA + AMP + diphosphate. In terms of biological role, catalyzes the conversion of acetate into acetyl-CoA (AcCoA), an essential intermediate at the junction of anabolic and catabolic pathways. AcsA undergoes a two-step reaction. In the first half reaction, AcsA combines acetate with ATP to form acetyl-adenylate (AcAMP) intermediate. In the second half reaction, it can then transfer the acetyl group from AcAMP to the sulfhydryl group of CoA, forming the product AcCoA. This is Acetyl-coenzyme A synthetase from Xylella fastidiosa (strain 9a5c).